A 660-amino-acid polypeptide reads, in one-letter code: DNA mismatch repair protein MutL (660 aa).

The protein belongs to the DNA mismatch repair MutL/HexB family.

This protein is involved in the repair of mismatches in DNA. It is required for dam-dependent methyl-directed DNA mismatch repair. May act as a 'molecular matchmaker', a protein that promotes the formation of a stable complex between two or more DNA-binding proteins in an ATP-dependent manner without itself being part of a final effector complex. This is DNA mismatch repair protein MutL from Streptococcus pyogenes serotype M3 (strain ATCC BAA-595 / MGAS315).